The following is a 185-amino-acid chain: MILPVFLYGQPVLRKEAEDVPKDYPDLKQLVANMFETMYNADGVGLAAPQVGLSIRLVVIDGDVMGDDFPECKGFKRALINPEFLERSEEEIAMEEGCLSLPGIHEKVSRSKTVRVRYWDENWEEHEEVVEGFAARIVQHECEHLTGHVFIDNVSAIRRQLNKGKLNSIIKGTVRCSYRAKAVGK.

Fe cation-binding residues include cysteine 98 and histidine 140. Glutamate 141 is a catalytic residue. Position 144 (histidine 144) interacts with Fe cation.

Belongs to the polypeptide deformylase family. It depends on Fe(2+) as a cofactor.

It carries out the reaction N-terminal N-formyl-L-methionyl-[peptide] + H2O = N-terminal L-methionyl-[peptide] + formate. In terms of biological role, removes the formyl group from the N-terminal Met of newly synthesized proteins. Requires at least a dipeptide for an efficient rate of reaction. N-terminal L-methionine is a prerequisite for activity but the enzyme has broad specificity at other positions. The sequence is that of Peptide deformylase from Parabacteroides distasonis (strain ATCC 8503 / DSM 20701 / CIP 104284 / JCM 5825 / NCTC 11152).